Reading from the N-terminus, the 642-residue chain is Threonine--tRNA ligase (642 aa).

The TGS domain occupies 1–61 (MPVITLPDGS…ESDAQLAIIT (61 aa)). The catalytic stretch occupies residues 243 to 534 (DHRKIGKQLD…LTEEYAGFFP (292 aa)). Residues Cys334, His385, and His511 each coordinate Zn(2+).

This sequence belongs to the class-II aminoacyl-tRNA synthetase family. Homodimer. It depends on Zn(2+) as a cofactor.

The protein resides in the cytoplasm. The enzyme catalyses tRNA(Thr) + L-threonine + ATP = L-threonyl-tRNA(Thr) + AMP + diphosphate + H(+). Functionally, catalyzes the attachment of threonine to tRNA(Thr) in a two-step reaction: L-threonine is first activated by ATP to form Thr-AMP and then transferred to the acceptor end of tRNA(Thr). Also edits incorrectly charged L-seryl-tRNA(Thr). This Yersinia pseudotuberculosis serotype O:1b (strain IP 31758) protein is Threonine--tRNA ligase.